Reading from the N-terminus, the 378-residue chain is Probable endopolygalacturonase NFIA_008150 (378 aa).

Residues 1–19 form the signal peptide; it reads MLKLIGSLVLLASAAEVIA. Residues 20-35 constitute a propeptide that is removed on maturation; the sequence is SPLAESVAPSITLEKR. A disulfide bridge connects residues C38 and C56. PbH1 repeat units lie at residues 147–169, 170–200, and 201–222; these read TSSS…SING, CDGL…DIGS, and SSNI…AVNS. The active-site Proton donor is the D215. C217 and C233 are joined by a disulfide. H237 is an active-site residue. PbH1 repeat units follow at residues 247–273 and 281–303; these read RSDN…RIKA and IKGI…LIEQ. N-linked (GlcNAc...) asparagine glycosylation is present at N254. N327 carries N-linked (GlcNAc...) asparagine glycosylation. Disulfide bonds link C345–C350 and C369–C378.

Belongs to the glycosyl hydrolase 28 family.

The protein resides in the secreted. The enzyme catalyses (1,4-alpha-D-galacturonosyl)n+m + H2O = (1,4-alpha-D-galacturonosyl)n + (1,4-alpha-D-galacturonosyl)m.. In terms of biological role, involved in maceration and soft-rotting of plant tissue. Hydrolyzes the 1,4-alpha glycosidic bonds of de-esterified pectate in the smooth region of the plant cell wall. The protein is Probable endopolygalacturonase NFIA_008150 of Neosartorya fischeri (strain ATCC 1020 / DSM 3700 / CBS 544.65 / FGSC A1164 / JCM 1740 / NRRL 181 / WB 181) (Aspergillus fischerianus).